The following is a 228-amino-acid chain: Cytidylate kinase (228 aa).

17-25 lines the ATP pocket; it reads GPTASGKGT.

It belongs to the cytidylate kinase family. Type 1 subfamily.

It is found in the cytoplasm. The catalysed reaction is CMP + ATP = CDP + ADP. It carries out the reaction dCMP + ATP = dCDP + ADP. This is Cytidylate kinase from Burkholderia multivorans (strain ATCC 17616 / 249).